The chain runs to 427 residues: Glutamate-1-semialdehyde 2,1-aminomutase (427 aa).

Lys265 carries the post-translational modification N6-(pyridoxal phosphate)lysine.

It belongs to the class-III pyridoxal-phosphate-dependent aminotransferase family. HemL subfamily. In terms of assembly, homodimer. Pyridoxal 5'-phosphate serves as cofactor.

Its subcellular location is the cytoplasm. It carries out the reaction (S)-4-amino-5-oxopentanoate = 5-aminolevulinate. It participates in porphyrin-containing compound metabolism; protoporphyrin-IX biosynthesis; 5-aminolevulinate from L-glutamyl-tRNA(Glu): step 2/2. This is Glutamate-1-semialdehyde 2,1-aminomutase from Burkholderia pseudomallei (strain 668).